An 87-amino-acid chain; its full sequence is MYVIELALKLSPLPVSVQRKALADAEAVYQQVRKCLERGQPHLLELSCEKVEDKKVTVLVSEIVAVQLYEKTAATGGSKRPGFSFET.

It belongs to the UPF0367 family.

The protein is UPF0367 protein P9303_26451 of Prochlorococcus marinus (strain MIT 9303).